Reading from the N-terminus, the 392-residue chain is Chalcone synthase B (392 aa).

C167 is a catalytic residue.

This sequence belongs to the thiolase-like superfamily. Chalcone/stilbene synthases family. As to expression, expressed at low level in seedlings after illumination with UV light. No expression in flowers or tissue culture.

It carries out the reaction (E)-4-coumaroyl-CoA + 3 malonyl-CoA + 3 H(+) = 2',4,4',6'-tetrahydroxychalcone + 3 CO2 + 4 CoA. Its pathway is secondary metabolite biosynthesis; flavonoid biosynthesis. Its function is as follows. The primary product of this enzyme is 4,2',4',6'-tetrahydroxychalcone (also termed naringenin-chalcone or chalcone) which can under specific conditions spontaneously isomerize into naringenin. This is Chalcone synthase B (CHSB) from Petunia hybrida (Petunia).